The following is a 746-amino-acid chain: Protein C-mannosyl-transferase DPY19L1 (746 aa).

Positions 1-68 are disordered; sequence MVLQARSKHR…RAGTAAPAPD (68 aa). A phosphoserine mark is found at Ser-28 and Ser-31. A compositionally biased stretch (low complexity) spans 59–68; sequence RAGTAAPAPD. 11 helical membrane-spanning segments follow: residues 137–159, 227–247, 257–279, 307–325, 331–350, 357–374, 380–396, 405–425, 481–501, 520–540, and 562–582; these read LYYSYFKTIVEAPSFLNGVWMIM, ACFYVAVIFMLNGLMMALFFI, LGGVVTVLCFFFNHGECTRVMWT, LCRGSLIALCISNVLFMLP, FVLLTQIASLFAVYVVGYID, IIYMHMISLVLCFVLMFG, TSYYASSLVIIWGMLAM, VSELSLWVIQGCGWLFGTVIL, LLLPVVLVTVAAIVRKIFNDM, GELVYHALQLLAYTALGVLIM, and LFGWLFGKVHPGAVVFAILAA.

It belongs to the dpy-19 family.

The protein resides in the endoplasmic reticulum membrane. It carries out the reaction L-tryptophyl-[protein] + a di-trans,poly-cis-dolichyl beta-D-mannosyl phosphate = C-alpha-D-mannosyl-L-tryptophyl-[protein] + a di-trans,poly-cis-dolichyl phosphate + H(+). Its pathway is protein modification; protein glycosylation. In terms of biological role, C-mannosyltransferase that mediates the C-mannosylation tryptophan residues on target proteins. The reaction occurs on the luminal side of the endoplasmic reticulum and involves the transfer of a mannose unit from a dolichylphosphate mannose (Dol-P-Man) donor to an acceptor protein containing a WxxW consensus sequence. C-mannosylates the first two tryptophans in the WxxWxxWxxC sequence motif in thrombospondin (TSP) type-1 repeats of UNC5A. Regulates neurite extension during development. The sequence is that of Protein C-mannosyl-transferase DPY19L1 (Dpy19l1) from Mus musculus (Mouse).